The following is a 70-amino-acid chain: Sec-independent protein translocase protein TatA (70 aa).

Residues 1–21 traverse the membrane as a helical segment; that stretch reads MAIGVNQLLIILVIIVLLFGA.

It belongs to the TatA/E family. In terms of assembly, the Tat system comprises two distinct complexes: a TatABC complex, containing multiple copies of TatA, TatB and TatC subunits, and a separate TatA complex, containing only TatA subunits. Substrates initially bind to the TatABC complex, which probably triggers association of the separate TatA complex to form the active translocon.

The protein resides in the cell inner membrane. Part of the twin-arginine translocation (Tat) system that transports large folded proteins containing a characteristic twin-arginine motif in their signal peptide across membranes. TatA could form the protein-conducting channel of the Tat system. The chain is Sec-independent protein translocase protein TatA from Campylobacter curvus (strain 525.92).